The primary structure comprises 250 residues: Dimethyl sulfide dehydrogenase assembly chaperone protein (250 aa).

The disordered stretch occupies residues 231 to 250; sequence SAEARSDSAPDAAAHQNLWG.

Belongs to the type II DMSO reductase enzyme chaperone family.

It is found in the cytoplasm. Its function is as follows. May function as a system-specific chaperone protein essential for the assembly of an active dimethyl sulfide dehydrogenase DdhABC. In Rhodovulum sulfidophilum (Rhodobacter sulfidophilus), this protein is Dimethyl sulfide dehydrogenase assembly chaperone protein (ddhD).